The following is a 262-amino-acid chain: uncharacterized protein (262 aa).

Residues histidine 7, histidine 9, glutamate 98, histidine 138, histidine 162, and aspartate 212 each contribute to the a divalent metal cation site.

This sequence belongs to the metallo-dependent hydrolases superfamily. TatD-type hydrolase family. A divalent metal cation serves as cofactor.

This is an uncharacterized protein from Haemophilus influenzae (strain ATCC 51907 / DSM 11121 / KW20 / Rd).